A 285-amino-acid polypeptide reads, in one-letter code: Inositol polyphosphate 1-phosphatase (285 aa).

The Mg(2+) site is built by Glu68, Asp106, Leu108, and Asp109. 1D-myo-inositol 1,4-bisphosphate contacts are provided by Asp109, Gly110, Thr111, Ser173, Gly195, Ser197, and Lys200. Asp223 is a binding site for Mg(2+).

It belongs to the inositol monophosphatase superfamily. Monomer. It depends on Mg(2+) as a cofactor.

It is found in the cytoplasm. The enzyme catalyses 1D-myo-inositol 1,4-bisphosphate + H2O = 1D-myo-inositol 4-phosphate + phosphate. It catalyses the reaction adenosine 3',5'-bisphosphate + H2O = AMP + phosphate. Partially inhibited by Li(2+). Catalyzes the hydrolysis of the 1-position phosphate from inositol 1,4-bisphosphate. Is also able to convert 3'(2')-phosphoadenosine 5'-phosphate (PAP) to AMP but with less efficiency. This Entamoeba histolytica (strain ATCC 30459 / HM-1:IMSS / ABRM) protein is Inositol polyphosphate 1-phosphatase.